The chain runs to 234 residues: Cyclo(L-leucyl-L-leucyl) synthase (234 aa).

Ser-33 acts as the Nucleophile in catalysis. Residues Asn-36, 179–183 (YIFAE), Tyr-203, and 208–209 (SI) each bind substrate.

It belongs to the CDPS family.

It catalyses the reaction 2 L-leucyl-tRNA(Leu) = cyclo(L-leucyl-L-leucyl) + 2 tRNA(Leu) + 2 H(+). It uses activated amino acids in the form of aminoacyl-tRNAs (aa-tRNAs) as substrates to catalyze the ATP-independent formation of cyclodipeptides which are intermediates in diketopiperazine (DKP) biosynthetic pathways. Catalyzes the formation of cyclo(L-Leu-L-Leu) (cLL) from L-leucyl-tRNA(Leu). Can incorporate various nonpolar residues, such as L-phenylalanine, L-leucine and L-methionine, into cyclodipeptides. The polypeptide is Cyclo(L-leucyl-L-leucyl) synthase (Photorhabdus laumondii subsp. laumondii (strain DSM 15139 / CIP 105565 / TT01) (Photorhabdus luminescens subsp. laumondii)).